Reading from the N-terminus, the 283-residue chain is Transport and Golgi organization protein 2 (283 aa).

Belongs to the Tango2 family.

The protein resides in the cytoplasm. Its subcellular location is the mitochondrion. It is found in the golgi apparatus. In terms of biological role, may play a role in Golgi organization. This Drosophila melanogaster (Fruit fly) protein is Transport and Golgi organization protein 2 (Tango2).